Reading from the N-terminus, the 142-residue chain is Large-conductance mechanosensitive channel (142 aa).

Helical transmembrane passes span 14-34 and 82-102; these read VMDL…VDSV and GNFI…FLLI.

The protein belongs to the MscL family. In terms of assembly, homopentamer.

The protein resides in the cell inner membrane. Its function is as follows. Channel that opens in response to stretch forces in the membrane lipid bilayer. May participate in the regulation of osmotic pressure changes within the cell. This Sinorhizobium medicae (strain WSM419) (Ensifer medicae) protein is Large-conductance mechanosensitive channel.